The sequence spans 320 residues: Mitochondrial thiamine pyrophosphate carrier (320 aa).

3 Solcar repeats span residues 13 to 106, 116 to 202, and 214 to 309; these read NTKF…LTEL, REFS…LKHL, and NENL…FCNV. A helical transmembrane segment spans residues 19–39; sequence AVAGSVSGLVTRALISPFDVI. Position 51 is a phosphoserine (Ser51). The next 4 helical transmembrane spans lie at 87-107, 122-142, 173-193, and 220-240; these read ILSIGYGAVQFLSFEMLTELV, FVCGGLAACMATLTVHPVDVL, VFYKGLAPTLIAIFPYAGLQF, and LLCGSGAGVISKTLTYPLDLF. Residues 241–246 carry the Substrate recognition motif; the sequence is KKRLQV. A helical transmembrane segment spans residues 293 to 313; sequence ALSTGFMFFSYEFFCNVFHCM.

The protein belongs to the mitochondrial carrier (TC 2.A.29) family. In terms of tissue distribution, expressed in all tissues examined except for placenta. Highest levels in colon, kidney, lung, testis, spleen, and brain.

The protein localises to the mitochondrion membrane. The catalysed reaction is thiamine phosphate(out) + thiamine diphosphate(in) = thiamine phosphate(in) + thiamine diphosphate(out). In terms of biological role, mitochondrial transporter mediating uptake of thiamine diphosphate into mitochondria. It is not clear if the antiporter activity is affected by the membrane potential or by the proton electrochemical gradient. This Homo sapiens (Human) protein is Mitochondrial thiamine pyrophosphate carrier.